An 89-amino-acid chain; its full sequence is Large ribosomal subunit protein bL27 (89 aa).

Residues 1–21 form a disordered region; sequence MAHKKAGGSSRNGRDTEGRRL.

It belongs to the bacterial ribosomal protein bL27 family.

The polypeptide is Large ribosomal subunit protein bL27 (Granulibacter bethesdensis (strain ATCC BAA-1260 / CGDNIH1)).